The primary structure comprises 2027 residues: Citron Rho-interacting kinase (2027 aa).

Residue Met-1 is modified to N-acetylmethionine. The Protein kinase domain maps to 97-360; that stretch reads FEVRSLVGCG…FEGLCCHPFF (264 aa). ATP-binding positions include 103-111 and Lys-126; that span reads VGCGHFAEV. The Proton acceptor role is filled by Asp-221. One can recognise an AGC-kinase C-terminal domain in the interval 361 to 431; sequence SKIDWNNIRN…SKALGILGRS (71 aa). Phosphoserine is present on residues Ser-433, Ser-440, Ser-480, and Ser-582. Positions 453-1297 form a coiled coil; sequence IKSKELQDSQ…SAREEAAHRK (845 aa). Residues 1091 to 1302 are interaction with Rho/Rac; that stretch reads LAVKEHKAEI…AAHRKATDHP (212 aa). At Tyr-1196 the chain carries Phosphotyrosine. Basic and acidic residues predominate over residues 1290–1303; the sequence is REEAAHRKATDHPH. Disordered stretches follow at residues 1290 to 1310 and 1322 to 1351; these read REEA…PATA and SPEH…EFSR. Over residues 1327–1337 the composition is skewed to low complexity; sequence PSAMSLLAPPS. Over residues 1339–1351 the composition is skewed to basic and acidic residues; the sequence is RRKESSTPEEFSR. The Phorbol-ester/DAG-type zinc finger occupies 1362–1411; that stretch reads PHRFNVGLNMRATKCAVCLDTVHFGRQASKCLECQVMCHPKCSTCLPATC. The region spanning 1443-1563 is the PH domain; it reads SLHLEGWMKV…WVTALESVVA (121 aa). The region spanning 1591–1881 is the CNH domain; sequence RLDMNCTLPF…RYLGPAISSG (291 aa). The residue at position 1721 (Lys-1721) is an N6-acetyllysine. The tract at residues 1905 to 2012 is disordered; the sequence is ESGTEHHRGP…RGRLPAGAVR (108 aa). Ser-1940 is subject to Phosphoserine. A compositionally biased stretch (basic and acidic residues) spans 1948 to 2003; it reads SHPREPSTPHRYREGRTELRRDKSPGRPLEREKSPGRMLSTRRERSPGRLFEDSSR. The short motif at 1953–1958 is the SH3-binding element; it reads PSTPHR. Residue Ser-1993 is modified to Phosphoserine. Thr-2013 carries the phosphothreonine modification.

This sequence belongs to the protein kinase superfamily. AGC Ser/Thr protein kinase family. Directly interacts with KIF14 depending on the activation state (stronger interaction with the kinase-dead form). Homodimer. Interacts with TTC3.

It localises to the cytoplasm. It catalyses the reaction L-seryl-[protein] + ATP = O-phospho-L-seryl-[protein] + ADP + H(+). The enzyme catalyses L-threonyl-[protein] + ATP = O-phospho-L-threonyl-[protein] + ADP + H(+). Functionally, plays a role in cytokinesis. Required for KIF14 localization to the central spindle and midbody. Putative RHO/RAC effector that binds to the GTP-bound forms of RHO and RAC1. It probably binds p21 with a tighter specificity in vivo. Displays serine/threonine protein kinase activity. Plays an important role in the regulation of cytokinesis and the development of the central nervous system. Phosphorylates MYL9/MLC2. The protein is Citron Rho-interacting kinase (CIT) of Homo sapiens (Human).